The chain runs to 466 residues: Soluble pyridine nucleotide transhydrogenase (466 aa).

Residue 36-45 (ERYQNVGGGC) coordinates FAD.

The protein belongs to the class-I pyridine nucleotide-disulfide oxidoreductase family. It depends on FAD as a cofactor.

It is found in the cytoplasm. The enzyme catalyses NAD(+) + NADPH = NADH + NADP(+). Functionally, conversion of NADPH, generated by peripheral catabolic pathways, to NADH, which can enter the respiratory chain for energy generation. This chain is Soluble pyridine nucleotide transhydrogenase, found in Escherichia coli O81 (strain ED1a).